The primary structure comprises 310 residues: Olfactory receptor 5P56 (310 aa).

Residues 1 to 25 (MEAQNHTTVKEFILLGLTENSTLRV) are Extracellular-facing. 2 N-linked (GlcNAc...) asparagine glycosylation sites follow: Asn-5 and Asn-20. Residues 26 to 46 (ILFMIFLGIYTVTLVGNFSII) form a helical membrane-spanning segment. At 47–54 (SLIRSCPQ) the chain is on the cytoplasmic side. Residues 55–75 (LHTPMYLFLSHLALVDIGFST) traverse the membrane as a helical segment. Over 76–99 (SITPIMLTGFLGHTVTLSVAACVA) the chain is Extracellular. A disulfide bridge links Cys-97 with Cys-189. The chain crosses the membrane as a helical span at residues 100–120 (QFCIAVTFGTVECFLLAVMAY). Residues 121–133 (DRYVAICSPLLYS) lie on the Cytoplasmic side of the membrane. The chain crosses the membrane as a helical span at residues 134-154 (THMSPRICFLLVGASYVGGCV). Residues 155–196 (NSGTFTSCLLILSFCGPNQIDHFFCDFPAVLKLSCSDVSIIG) lie on the Extracellular side of the membrane. A helical transmembrane segment spans residues 197 to 217 (IIPSISAGSIIVITVFVIAVS). The Cytoplasmic portion of the chain corresponds to 218–237 (YTYILITILNMRSTEGRHKA). The helical transmembrane segment at 238–258 (FSTCTSHLTAVTLYYGTITFI) threads the bilayer. At 259 to 271 (YVMPKSNYSTAQN) the chain is on the extracellular side. Asn-265 carries N-linked (GlcNAc...) asparagine glycosylation. Residues 272-292 (KILSVFYTVVIPMLNPLIYSL) form a helical membrane-spanning segment. At 293-310 (RNRDVKEALRKAIIRIFP) the chain is on the cytoplasmic side.

It belongs to the G-protein coupled receptor 1 family.

The protein resides in the cell membrane. Potential odorant receptor. In Mus musculus (Mouse), this protein is Olfactory receptor 5P56.